A 125-amino-acid chain; its full sequence is Ixonnexin (125 aa).

The N-terminal stretch at 1 to 21 is a signal peptide; it reads MGLTGTTLVLVCVAFFGSAAA. Residue Asn-26 is glycosylated (N-linked (GlcNAc...) asparagine). The tract at residues 81 to 125 is disordered; that stretch reads TSSGGPDDTGDNTPPPTEKPKQKKKKPKKTKKPKRKSKKDQKENF. Basic residues predominate over residues 101–119; that stretch reads KQKKKKPKKTKKPKRKSKK.

This sequence belongs to the salp14 family. Homodimer. Interacts with host PLG. Interacts with host PLAT. As to expression, saliva (at protein level).

Its subcellular location is the secreted. Functionally, salivary protein that promotes host fibrinolysis via accelerating host plasmin generation from plasminogen (PLG) initiated by tPA/tissue-type plasminogen activator (PLAT). Does not affect urokinase (PLAU)-mediated fibrinolysis in the host. Enhances amidolytic activity of host coagulation factor Xa (F10). This chain is Ixonnexin, found in Ixodes scapularis (Black-legged tick).